Here is a 254-residue protein sequence, read N- to C-terminus: Diphthine synthase (254 aa).

Residues L11, D87, I90, 115–116 (SV), L167, L208, and H233 contribute to the S-adenosyl-L-methionine site.

The protein belongs to the diphthine synthase family. Homodimer.

It carries out the reaction 2-[(3S)-amino-3-carboxypropyl]-L-histidyl-[translation elongation factor 2] + 3 S-adenosyl-L-methionine = diphthine-[translation elongation factor 2] + 3 S-adenosyl-L-homocysteine + 3 H(+). Its pathway is protein modification; peptidyl-diphthamide biosynthesis. In terms of biological role, S-adenosyl-L-methionine-dependent methyltransferase that catalyzes the trimethylation of the amino group of the modified target histidine residue in translation elongation factor 2 (EF-2), to form an intermediate called diphthine. The three successive methylation reactions represent the second step of diphthamide biosynthesis. This chain is Diphthine synthase, found in Metallosphaera sedula (strain ATCC 51363 / DSM 5348 / JCM 9185 / NBRC 15509 / TH2).